We begin with the raw amino-acid sequence, 274 residues long: uncharacterized protein (274 aa).

Over residues 1-17 the composition is skewed to low complexity; the sequence is MTQLTNFSESFSNQNSN. Disordered stretches follow at residues 1 to 38 and 222 to 274; these read MTQLTNFSESFSNQNSNLHQPYNFNSHQPPEENHYYVR and ELGT…MEFE. Residues 18-28 show a composition bias toward polar residues; it reads LHQPYNFNSHQ. The span at 29-38 shows a compositional bias: basic and acidic residues; it reads PPEENHYYVR. Polar residues-rich tracts occupy residues 239–249 and 256–265; these read PMASPTGSSQI and SPNSLTNGSV.

This is an uncharacterized protein from Caenorhabditis elegans.